Consider the following 778-residue polypeptide: LPS-assembly protein LptD (778 aa).

The first 23 residues, 1–23 (MKTRYSVLSVAMTAAFYTQYAQA), serve as a signal peptide directing secretion.

The protein belongs to the LptD family. In terms of assembly, component of the lipopolysaccharide transport and assembly complex. Interacts with LptE and LptA.

It is found in the cell outer membrane. In terms of biological role, together with LptE, is involved in the assembly of lipopolysaccharide (LPS) at the surface of the outer membrane. This chain is LPS-assembly protein LptD, found in Actinobacillus pleuropneumoniae serotype 7 (strain AP76).